The chain runs to 296 residues: Peptide transport system permease protein SapC (296 aa).

Residues 1–28 (MPYDSVYSEKRPPGTLRTAWRKFYSDAP) are Cytoplasmic-facing. Residues 29-49 (AMVGLYGCAGLALLCIFGGWI) form a helical membrane-spanning segment. Residues 50 to 98 (APYGIDQQFLGYQLLPPSWSRYGEVSFFLGTDDLGRDVLSRLLSGAAPT) are Periplasmic-facing. A helical transmembrane segment spans residues 99–119 (VGGAFIVTLAATLCGLVLGVV). Residues 99-284 (VGGAFIVTLA…LSVLLVNLLG (186 aa)) enclose the ABC transmembrane type-1 domain. Residues 120–133 (AGATHGLRSAVLNH) are Cytoplasmic-facing. A helical transmembrane segment spans residues 134–154 (ILDTLLSIPSLLLAIIVVAFA). Over 155-196 (GPHLSHAMFAVWLALLPRMVRSVYSMVHDELEKEYVIAARLD) the chain is Periplasmic. A helical transmembrane segment spans residues 197–217 (GATTLNILWFAILPNITAGLV). The Cytoplasmic portion of the chain corresponds to 218–222 (TEITR). The helical transmembrane segment at 223 to 243 (ALSMAILDIAALGFLDLGAQL) threads the bilayer. The Periplasmic segment spans residues 244–257 (PSPEWGAMLGDALE). Residues 258–278 (LIYVAPWTVMLPGAAITLSVL) form a helical membrane-spanning segment. At 279-296 (LVNLLGDGIRRAIIAGVE) the chain is on the cytoplasmic side.

This sequence belongs to the binding-protein-dependent transport system permease family. OppBC subfamily.

Its subcellular location is the cell inner membrane. In terms of biological role, involved in a peptide intake transport system that plays a role in the resistance to antimicrobial peptides. This is Peptide transport system permease protein SapC (sapC) from Salmonella typhi.